A 92-amino-acid polypeptide reads, in one-letter code: Small ribosomal subunit protein bS18c (92 aa).

It belongs to the bacterial ribosomal protein bS18 family. As to quaternary structure, part of the 30S ribosomal subunit.

It localises to the plastid. The protein is Small ribosomal subunit protein bS18c (rps18) of Epifagus virginiana (Beechdrops).